A 256-amino-acid chain; its full sequence is 5'-nucleotidase SurE (256 aa).

A divalent metal cation-binding residues include aspartate 9, aspartate 10, serine 42, and asparagine 95.

The protein belongs to the SurE nucleotidase family. Requires a divalent metal cation as cofactor.

The protein localises to the cytoplasm. It carries out the reaction a ribonucleoside 5'-phosphate + H2O = a ribonucleoside + phosphate. Nucleotidase that shows phosphatase activity on nucleoside 5'-monophosphates. The sequence is that of 5'-nucleotidase SurE from Campylobacter curvus (strain 525.92).